A 361-amino-acid polypeptide reads, in one-letter code: Phosphoserine aminotransferase (361 aa).

Arg-43 is an L-glutamate binding site. Residues 77 to 78, Trp-103, Thr-153, Asp-173, and Gln-196 contribute to the pyridoxal 5'-phosphate site; that span reads AS. Residue Lys-197 is modified to N6-(pyridoxal phosphate)lysine. A pyridoxal 5'-phosphate-binding site is contributed by 238–239; sequence NT.

Belongs to the class-V pyridoxal-phosphate-dependent aminotransferase family. SerC subfamily. Homodimer. It depends on pyridoxal 5'-phosphate as a cofactor.

The protein resides in the cytoplasm. It carries out the reaction O-phospho-L-serine + 2-oxoglutarate = 3-phosphooxypyruvate + L-glutamate. The enzyme catalyses 4-(phosphooxy)-L-threonine + 2-oxoglutarate = (R)-3-hydroxy-2-oxo-4-phosphooxybutanoate + L-glutamate. It participates in amino-acid biosynthesis; L-serine biosynthesis; L-serine from 3-phospho-D-glycerate: step 2/3. It functions in the pathway cofactor biosynthesis; pyridoxine 5'-phosphate biosynthesis; pyridoxine 5'-phosphate from D-erythrose 4-phosphate: step 3/5. Its function is as follows. Catalyzes the reversible conversion of 3-phosphohydroxypyruvate to phosphoserine and of 3-hydroxy-2-oxo-4-phosphonooxybutanoate to phosphohydroxythreonine. This is Phosphoserine aminotransferase from Pseudomonas fluorescens (strain SBW25).